Reading from the N-terminus, the 522-residue chain is BTB/POZ domain-containing protein 16 (522 aa).

Residues 166-222 (INDPAVTRVAFALALKNLYMKEVEMTVDNVLGVLASAHILQFNRLFQKCVNMMMNRL) enclose the BTB domain.

The polypeptide is BTB/POZ domain-containing protein 16 (Btbd16) (Mus musculus (Mouse)).